An 80-amino-acid polypeptide reads, in one-letter code: UPF0512 protein J (80 aa).

It belongs to the UPF0512 family.

This is UPF0512 protein J from Dictyostelium discoideum (Social amoeba).